Here is a 71-residue protein sequence, read N- to C-terminus: MRQEIHPKYTEVTVTCSCGNTFVTRSTAGKKEMNIDICSECHPFYTGKQRIVDTAGRVDKFKKRFGGMKKI.

Cys-16, Cys-18, Cys-38, and Cys-41 together coordinate Zn(2+).

Belongs to the bacterial ribosomal protein bL31 family. Type A subfamily. Part of the 50S ribosomal subunit. Zn(2+) is required as a cofactor.

Its function is as follows. Binds the 23S rRNA. The sequence is that of Large ribosomal subunit protein bL31 from Francisella tularensis subsp. mediasiatica (strain FSC147).